The sequence spans 1256 residues: Bifunctional autolysin (1256 aa).

The first 29 residues, 1–29, serve as a signal peptide directing secretion; it reads MAKKFNYKLPSMVALTLVGSAVTAHQVQA. Polar residues predominate over residues 103–138; it reads GDTRANQSATTNNTQPVAKSTSTTAPKTNTNVTNAG. 3 disordered regions span residues 103-151, 172-219, and 419-440; these read GDTR…NSEN, KTAA…KYKP, and TQST…PSTG. Low complexity-rich tracts occupy residues 172–196 and 421–439; these read KTAA…KVTT and STTT…KPST. The segment at 199–775 is N-acetylmuramoyl-L-alanine amidase; sequence ASAQPRSVAA…AVAQPKTAVK (577 aa). GW domains lie at 443–517, 519–593, 612–686, 688–762, 784–859, 861–936, and 943–1017; these read TVAA…YNTA, SPVN…DTAK, TVSS…YNNA, SPVN…VPAA, TTQT…VQNL, KEVK…APTA, and AAKD…KELI. The tract at residues 776-1256 is endo-beta-N-acetylglucosaminidase; sequence AYTVTKPQTT…GKYFDIPQYK (481 aa).

It in the N-terminal section; belongs to the N-acetylmuramoyl-L-alanine amidase 2 family. This sequence in the C-terminal section; belongs to the glycosyl hydrolase 73 family. Oligomer; forms a ring structure at the cell surface which is important for efficient partitioning of daughter cells after cell division. Undergoes proteolytic processing to generate the two extracellular lytic enzymes, probably at the septal region on the cell surface.

Its subcellular location is the secreted. The catalysed reaction is Hydrolyzes the link between N-acetylmuramoyl residues and L-amino acid residues in certain cell-wall glycopeptides.. The enzyme catalyses an N(4)-(oligosaccharide-(1-&gt;3)-[oligosaccharide-(1-&gt;6)]-beta-D-Man-(1-&gt;4)-beta-D-GlcNAc-(1-&gt;4)-alpha-D-GlcNAc)-L-asparaginyl-[protein] + H2O = an oligosaccharide-(1-&gt;3)-[oligosaccharide-(1-&gt;6)]-beta-D-Man-(1-&gt;4)-D-GlcNAc + N(4)-(N-acetyl-beta-D-glucosaminyl)-L-asparaginyl-[protein]. In terms of biological role, endohydrolysis of the di-N-acetylchitobiosyl unit in high-mannose glycopeptides and glycoproteins containing the -[(Man)5(GlcNAc)2]-Asn structure. One N-acetyl-D-glucosamine residue remains attached to the protein; the rest of the oligosaccharide is released intact. Cleaves the peptidoglycan connecting the daughter cells at the end of the cell division cycle, resulting in the separation of the two newly divided cells. Acts as an autolysin in penicillin-induced lysis. This chain is Bifunctional autolysin (atl), found in Staphylococcus aureus (strain COL).